The primary structure comprises 655 residues: ATP-dependent zinc metalloprotease FtsH (655 aa).

The Cytoplasmic portion of the chain corresponds to 1-17; sequence MPIETEPNRTRKNFEPK. A helical membrane pass occupies residues 18–38; sequence RFGGSLFILFTLLLFLNLFVL. At 39–124 the chain is on the lumenal side; it reads RGPRFPITAY…APPPSSLSWL (86 aa). The chain crosses the membrane as a helical span at residues 125–145; that stretch reads PTLLGWVVPPLIFFGIWSWLI. At 146–655 the chain is on the cytoplasmic side; sequence NRNQGAGPAA…LNSHQLIGIN (510 aa). 216–223 lines the ATP pocket; the sequence is GPPGTGKT. A Zn(2+)-binding site is contributed by His440. Residue Glu441 is part of the active site. Residues His444 and Asp517 each coordinate Zn(2+).

It in the central section; belongs to the AAA ATPase family. In the C-terminal section; belongs to the peptidase M41 family. Homohexamer. The cofactor is Zn(2+).

Its subcellular location is the cellular thylakoid membrane. In terms of biological role, acts as a processive, ATP-dependent zinc metallopeptidase for both cytoplasmic and membrane proteins. Plays a role in the quality control of integral membrane proteins. This Acaryochloris marina (strain MBIC 11017) protein is ATP-dependent zinc metalloprotease FtsH.